Here is a 523-residue protein sequence, read N- to C-terminus: Factor arrest protein 8 (523 aa).

The stretch at threonine 26–glutamate 76 forms a coiled coil. The tract at residues asparagine 61–proline 80 is disordered. A compositionally biased stretch (basic and acidic residues) spans glutamate 71 to proline 80. Serine 115 is subject to Phosphoserine. Phosphothreonine is present on threonine 132. The interval alanine 150–valine 171 is disordered. Residues glutamine 160 to valine 171 show a composition bias toward polar residues.

In terms of assembly, component of a complex at least composed of FAR3, FAR7, FAR8, FAR10, FAR11 and VPS64.

It is found in the cytoplasm. The protein localises to the endoplasmic reticulum. Functionally, participates in the control of the reentry into the cell cycle following pheromone treatment. The protein is Factor arrest protein 8 (FAR8) of Saccharomyces cerevisiae (strain ATCC 204508 / S288c) (Baker's yeast).